The following is a 370-amino-acid chain: tRNA-specific 2-thiouridylase MnmA (370 aa).

ATP is bound by residues 8–15 (GMSGGVDS) and Met-34. Residues 104–106 (NPD) are interaction with target base in tRNA. The active-site Nucleophile is Cys-109. The cysteines at positions 109 and 202 are disulfide-linked. ATP is bound at residue Gly-134. The interval 152–154 (KDQ) is interaction with tRNA. Residue Cys-202 is the Cysteine persulfide intermediate of the active site. Positions 309–310 (RY) are interaction with tRNA.

This sequence belongs to the MnmA/TRMU family.

Its subcellular location is the cytoplasm. It catalyses the reaction S-sulfanyl-L-cysteinyl-[protein] + uridine(34) in tRNA + AH2 + ATP = 2-thiouridine(34) in tRNA + L-cysteinyl-[protein] + A + AMP + diphosphate + H(+). Catalyzes the 2-thiolation of uridine at the wobble position (U34) of tRNA, leading to the formation of s(2)U34. This Metamycoplasma arthritidis (strain 158L3-1) (Mycoplasma arthritidis) protein is tRNA-specific 2-thiouridylase MnmA.